The chain runs to 185 residues: Urease accessory protein UreE (185 aa).

Residues 153–185 form a disordered region; the sequence is LRANSAQGHGHSHSHSHDHHGYHHHGDGHWHKH. The segment covering 162–175 has biased composition (basic residues); it reads GHSHSHSHDHHGYH. The segment covering 176–185 has biased composition (basic and acidic residues); that stretch reads HHGDGHWHKH.

Belongs to the UreE family.

Its subcellular location is the cytoplasm. In terms of biological role, involved in urease metallocenter assembly. Binds nickel. Probably functions as a nickel donor during metallocenter assembly. This is Urease accessory protein UreE from Haemophilus influenzae (strain 86-028NP).